Consider the following 356-residue polypeptide: uncharacterized protein (356 aa).

6 helical membrane passes run 2–22 (FEAI…FHRL), 36–56 (YVTV…VPIF), 77–97 (MFYT…IGDY), 99–119 (IITA…GPFL), 124–144 (IISL…LSLI), and 154–174 (LFLI…FVDI). The GGDEF domain maps to 218–353 (QSLGLLLIDI…GRNQVMFNPI (136 aa)).

It is found in the cell membrane. This is an uncharacterized protein from Staphylococcus saprophyticus subsp. saprophyticus (strain ATCC 15305 / DSM 20229 / NCIMB 8711 / NCTC 7292 / S-41).